Reading from the N-terminus, the 193-residue chain is Probable thymidylate kinase (193 aa).

7–14 (GIDGAGKT) serves as a coordination point for ATP.

It belongs to the thymidylate kinase family.

It carries out the reaction dTMP + ATP = dTDP + ADP. This is Probable thymidylate kinase (tmk) from Thermoplasma acidophilum (strain ATCC 25905 / DSM 1728 / JCM 9062 / NBRC 15155 / AMRC-C165).